Consider the following 348-residue polypeptide: Fe-S cluster assembly protein DRE2 (348 aa).

Residues Met1–Val185 form an N-terminal SAM-like domain region. Disordered regions lie at residues Gln128 to Leu148 and Lys162 to Lys213. Residues Val186 to Ser241 are linker. The span at Glu188–Ser206 shows a compositional bias: acidic residues. Residues Cys248, Cys259, Cys262, and Cys264 each contribute to the [2Fe-2S] cluster site. The fe-S binding site A stretch occupies residues Cys248 to Cys264. Cys311, Cys314, Cys322, and Cys325 together coordinate [4Fe-4S] cluster. 2 consecutive short sequence motifs (cx2C motif) follow at residues Cys311–Cys314 and Cys322–Cys325. The segment at Cys311–Cys325 is fe-S binding site B.

This sequence belongs to the anamorsin family. As to quaternary structure, monomer. Interacts with TAH18. Interacts with MIA40. [2Fe-2S] cluster serves as cofactor. [4Fe-4S] cluster is required as a cofactor.

Its subcellular location is the cytoplasm. The protein resides in the mitochondrion intermembrane space. In terms of biological role, component of the cytosolic iron-sulfur (Fe-S) protein assembly (CIA) machinery required for the maturation of extramitochondrial Fe-S proteins. Part of an electron transfer chain functioning in an early step of cytosolic Fe-S biogenesis, facilitating the de novo assembly of a [4Fe-4S] cluster on the scaffold complex CFD1-NBP35. Electrons are transferred to DRE2 from NADPH via the FAD- and FMN-containing protein TAH18. TAH18-DRE2 are also required for the assembly of the diferric tyrosyl radical cofactor of ribonucleotide reductase (RNR), probably by providing electrons for reduction during radical cofactor maturation in the catalytic small subunit RNR2. In Lachancea thermotolerans (strain ATCC 56472 / CBS 6340 / NRRL Y-8284) (Yeast), this protein is Fe-S cluster assembly protein DRE2.